The following is a 129-amino-acid chain: Small ribosomal subunit protein uS9 (129 aa).

The protein belongs to the universal ribosomal protein uS9 family.

The sequence is that of Small ribosomal subunit protein uS9 from Chlorobium limicola (strain DSM 245 / NBRC 103803 / 6330).